Reading from the N-terminus, the 674-residue chain is UvrABC system protein B (674 aa).

Positions 26–414 (EGLDSGLAHQ…SGNDIAEQVV (389 aa)) constitute a Helicase ATP-binding domain. 39-46 (GVTGSGKT) is an ATP binding site. The Beta-hairpin motif lies at 92-115 (YYDYYQPEAYVPTTDTFIEKDASV). Positions 432–586 (QVDDLLSEIR…ALHNKKNGIT (155 aa)) constitute a Helicase C-terminal domain. The 36-residue stretch at 634-669 (ELEIQRLETEMYDLAQNLEFEKAAEARDKIHTLRQQ) folds into the UVR domain.

It belongs to the UvrB family. Forms a heterotetramer with UvrA during the search for lesions. Interacts with UvrC in an incision complex.

Its subcellular location is the cytoplasm. The UvrABC repair system catalyzes the recognition and processing of DNA lesions. A damage recognition complex composed of 2 UvrA and 2 UvrB subunits scans DNA for abnormalities. Upon binding of the UvrA(2)B(2) complex to a putative damaged site, the DNA wraps around one UvrB monomer. DNA wrap is dependent on ATP binding by UvrB and probably causes local melting of the DNA helix, facilitating insertion of UvrB beta-hairpin between the DNA strands. Then UvrB probes one DNA strand for the presence of a lesion. If a lesion is found the UvrA subunits dissociate and the UvrB-DNA preincision complex is formed. This complex is subsequently bound by UvrC and the second UvrB is released. If no lesion is found, the DNA wraps around the other UvrB subunit that will check the other stand for damage. The protein is UvrABC system protein B of Photobacterium profundum (strain SS9).